Consider the following 839-residue polypeptide: Protein translocase subunit SecA (839 aa).

ATP contacts are provided by residues Gln-85, 103–107, and Asp-492; that span reads GEGKT. A disordered region spans residues 794-820; it reads EINYSGPDAGDTKKEPVRRKEKKIGRN. Residues Cys-823, Cys-825, Cys-834, and Cys-835 each coordinate Zn(2+).

Belongs to the SecA family. Monomer and homodimer. Part of the essential Sec protein translocation apparatus which comprises SecA, SecYEG and auxiliary proteins SecDF. Other proteins may also be involved. Requires Zn(2+) as cofactor.

Its subcellular location is the cell membrane. The protein localises to the cytoplasm. It catalyses the reaction ATP + H2O + cellular proteinSide 1 = ADP + phosphate + cellular proteinSide 2.. Its function is as follows. Part of the Sec protein translocase complex. Interacts with the SecYEG preprotein conducting channel. Has a central role in coupling the hydrolysis of ATP to the transfer of proteins into and across the cell membrane, serving as an ATP-driven molecular motor driving the stepwise translocation of polypeptide chains across the membrane. The protein is Protein translocase subunit SecA of Clostridium acetobutylicum (strain ATCC 824 / DSM 792 / JCM 1419 / IAM 19013 / LMG 5710 / NBRC 13948 / NRRL B-527 / VKM B-1787 / 2291 / W).